The following is a 170-amino-acid chain: Cytidine diphosphoramidate kinase (170 aa).

The protein belongs to the APS kinase family.

It catalyses the reaction cytidine 5'-diphosphoramidate + ATP = cytidine 3'-phospho-5'-diphosphoramidate + ADP + H(+). Its pathway is capsule biogenesis; capsule polysaccharide biosynthesis. Involved in the biosynthesis of the O-methyl phosphoramidate (MeOPN) group found on the capsular polysaccharide (CPS) of C.jejuni. Catalyzes the ATP-dependent phosphorylation of cytidine diphosphoramidate (CDP-NH(2)) to form cytidine 3'-phosphate 5'-diphosphoramidate. Can also use other substrates such as the corresponding adenine and uridine diphosphoramidate derivatives or cytidine diphosphoramidate analogs, with lower efficiency. In Campylobacter jejuni subsp. jejuni serotype O:2 (strain ATCC 700819 / NCTC 11168), this protein is Cytidine diphosphoramidate kinase.